A 627-amino-acid polypeptide reads, in one-letter code: Lactose permease (627 aa).

The interval 1-460 (MKKKLVSRLS…AEIVDQLETQ (460 aa)) is permease. The next 12 helical transmembrane spans lie at 13 to 33 (AGAFGNDVFYATLSTYFIVFV), 46 to 66 (IFIITNLITAIRIGEVLLDPL), 84 to 104 (WVVGGGIISSLALLALFTDFG), 111 to 131 (PVVYLVIFGIVYLIMDIFYSF), 159 to 179 (VGSTIGANLVGVVITPIILFF), 193 to 213 (WFFFALIVAIVGILTSITVGL), 244 to 264 (LLWLAFAYWFYGLGINTLNAL), 281 to 301 (LLYTINTFVGLISASFFPSLA), 309 to 329 (LFYACIAVMLLGIGVFSVASG), 336 to 356 (VGAEFFFIPQPLAFLVVLMII), 392 to 412 (WFVSLIALTAGMTTGATASTI), and 419 to 439 (VFKLAMFALPAVMLLIAVSIF). Positions 493-597 (DPVFADKKLG…DDTVIVTVIN (105 aa)) constitute a PTS EIIA type-1 domain. Phosphohistidine; by HPr is present on histidine 545.

It in the N-terminal section; belongs to the sodium:galactoside symporter (TC 2.A.2) family.

It is found in the cell membrane. In terms of biological role, responsible for transport of beta-galactosides into the cell, with the concomitant uptake of protons (symport system), and also for transport of homologous and heterologous exchange of beta-galactosides. The polypeptide is Lactose permease (lacY) (Lactobacillus delbrueckii subsp. bulgaricus (strain ATCC 11842 / DSM 20081 / BCRC 10696 / JCM 1002 / NBRC 13953 / NCIMB 11778 / NCTC 12712 / WDCM 00102 / Lb 14)).